We begin with the raw amino-acid sequence, 207 residues long: MAEYTLPDLDWDYAALEPHISGQINEIHHTKHHATYVKGVNDALAKLEEARANEDHAAIFLNEKNLAFHLGGHVNHSIWWKNLSPDGGDKPTGELAAAIDDAFGSFDKFRAQFSAAANGLQGSGWAVLGYDTVGSRLLTFQLYDQQANVPLGIIPLLQVDMWEHAFYLQYKNVKADYVKAFWNVVNWADVQKRYAAATSKAQGLIFG.

4 residues coordinate Mn(2+): histidine 28, histidine 76, aspartate 160, and histidine 164.

The protein belongs to the iron/manganese superoxide dismutase family. Mn(2+) serves as cofactor.

It is found in the secreted. It carries out the reaction 2 superoxide + 2 H(+) = H2O2 + O2. In terms of biological role, destroys superoxide anion radicals which are normally produced within the cells and which are toxic to biological systems. This Mycolicibacterium paratuberculosis (strain ATCC BAA-968 / K-10) (Mycobacterium paratuberculosis) protein is Superoxide dismutase [Mn] (sodA).